We begin with the raw amino-acid sequence, 126 residues long: CD59 glycoprotein (126 aa).

The N-terminal stretch at 1 to 25 (MGIQGGSVLFGLLLALAVFCHSGHS) is a signal peptide. Residues 26-106 (LQCYNCPNPT…QLENGGTSLS (81 aa)) form the UPAR/Ly6 domain. Intrachain disulfides connect Cys-28–Cys-51, Cys-31–Cys-38, Cys-44–Cys-64, Cys-70–Cys-88, and Cys-89–Cys-94. Asn-43 is a glycosylation site (N-linked (GlcNAc...) asparagine). Residue Asn-100 is the site of GPI-anchor amidated asparagine attachment. The propeptide at 101-126 (GGTSLSEKTVLLLVTPLLAAAWCLHP) is removed in mature form.

In terms of assembly, interacts with T-cell surface antigen CD2. Post-translationally, N- and O-glycosylated.

It localises to the cell membrane. It is found in the secreted. Functionally, potent inhibitor of the complement membrane attack complex (MAC) action, which protects self-cells from damage during complement activation. Acts by binding to the beta-haipins of C8 (C8A and C8B) components of the assembling MAC, forming an intermolecular beta-sheet that prevents incorporation of the multiple copies of C9 required for complete formation of the osmolytic pore. The protein is CD59 glycoprotein of Papio sp. (Baboon).